The chain runs to 699 residues: UvrABC system protein B (699 aa).

In terms of domain architecture, Helicase ATP-binding spans 35-188; sequence ERINNGEKDV…DHLLRKFVSM (154 aa). ATP is bound at residue 48-55; it reads GATGTGKS. Positions 101 to 124 match the Beta-hairpin motif; sequence YYDYYQPEAYVAQTDTFIEKDSSI. The Helicase C-terminal domain maps to 438-604; it reads QIDDLLGEIR…PLRKKIADIT (167 aa). A UVR domain is found at 654 to 689; that stretch reads VGLIEQLTEQMHGAAAELQFEVAARIRDEVKELKRE.

The protein belongs to the UvrB family. Forms a heterotetramer with UvrA during the search for lesions. Interacts with UvrC in an incision complex.

It is found in the cytoplasm. The UvrABC repair system catalyzes the recognition and processing of DNA lesions. A damage recognition complex composed of 2 UvrA and 2 UvrB subunits scans DNA for abnormalities. Upon binding of the UvrA(2)B(2) complex to a putative damaged site, the DNA wraps around one UvrB monomer. DNA wrap is dependent on ATP binding by UvrB and probably causes local melting of the DNA helix, facilitating insertion of UvrB beta-hairpin between the DNA strands. Then UvrB probes one DNA strand for the presence of a lesion. If a lesion is found the UvrA subunits dissociate and the UvrB-DNA preincision complex is formed. This complex is subsequently bound by UvrC and the second UvrB is released. If no lesion is found, the DNA wraps around the other UvrB subunit that will check the other stand for damage. This is UvrABC system protein B from Paenarthrobacter aurescens (strain TC1).